A 1342-amino-acid polypeptide reads, in one-letter code: Zinc finger protein 335 (1342 aa).

Disordered regions lie at residues 1–102 (MEEN…VTGG) and 201–228 (TSTS…AEEP). The span at 34-49 (AVSADSSDAAAAPGQA) shows a compositional bias: low complexity. Positions 201-217 (TSTSTCLEAQGGPSSPV) are enriched in polar residues. The C2H2-type 1 zinc-finger motif lies at 245-268 (FKCKMCQYRSSTKATLLRHMRERH). A disordered region spans residues 274-442 (AAAAAAGKKG…TLPRRRGRPS (169 aa)). The span at 297–327 (EEGPEEEDDDDIVDAGAIDDLEEDSDYNPAE) shows a compositional bias: acidic residues. Residues 346–357 (RPRRRPGRPRKL) are compositionally biased toward basic residues. 8 consecutive C2H2-type zinc fingers follow at residues 465–487 (FLCR…VNSH), 495–517 (FKCL…MFNH), 523–545 (YKCD…AAVH), 562–584 (FPCP…MKTH), 590–612 (HMCD…LLTH), 621–643 (FKCE…QLSH), 649–672 (FKCS…AVKH), and 678–701 (FACE…RCRH). Disordered regions lie at residues 732-763 (LKQQ…QSSE) and 964-1013 (CGGL…SAAT). Positions 740 to 753 (PGPPPSSPGPPEIP) are enriched in pro residues. Phosphoserine is present on residues Ser976, Ser992, and Ser1007. A compositionally biased stretch (low complexity) spans 986 to 997 (SQSSASSPPATS). 4 consecutive C2H2-type zinc fingers follow at residues 1019–1041 (FSCK…KRAH), 1047–1069 (FKCP…MAQH), 1075–1097 (HQCS…MLTH), and 1103–1126 (FACH…QRLH). A Glycyl lysine isopeptide (Lys-Gly) (interchain with G-Cter in SUMO2) cross-link involves residue Lys1022. An involved in the interaction with CCAR2 region spans residues 1041 to 1342 (HAGPGAFKCP…EYDVITLADD (302 aa)). A Phosphoserine modification is found at Ser1153.

It belongs to the krueppel C2H2-type zinc-finger protein family. As to quaternary structure, interacts with NCOA6; may enhance ligand-dependent transcriptional activation by nuclear hormone receptors. Interacts with CNOT6. Interacts with CNOT9; the interaction is direct. Component of a nuclear receptor-mediated transcription complex composed of at least ZNF335, CCAR2 and EMSY; the complex stimulates the transcription of nuclear receptor target genes such as SOX9 and HOXA1. Within the complex interacts with EMSY and interacts (via C-terminus) with CCAR2. Interacts with members of histone H3'Lys4'(H3K4) methyltransferase complexes ASH2L, CXXC1, KMT2A/MLL1, RBBP5, SETD1A and WDR5. Component of a histone methylation complex composed of at least ZNF335, RBBP5, ASH2L and WDR5; the complex may have histone H3-specific methyltransferase activity, however does not have specificity for 'Lys-4' of histone H3. Interacts with RBBP5 and WDR5. Interacts with ASHL2. Components of this complex may associate with components of the ZNF335-CCAR2-EMSY nuclear receptor-mediated transcription complex to form a complex at least composed of ZNF335, HCFC1, CCAR2, EMSY, MKI67, RBBP5, ASH2L and WDR5. Within this complex also interacts with HCFC1 and MKI67. In terms of tissue distribution, ubiquitously expressed.

The protein resides in the nucleus. Component or associated component of some histone methyltransferase complexes may regulate transcription through recruitment of those complexes on gene promoters. Enhances ligand-dependent transcriptional activation by nuclear hormone receptors. Plays an important role in neural progenitor cell proliferation and self-renewal through the regulation of specific genes involved brain development, including REST. Also controls the expression of genes involved in somatic development and regulates, for instance, lymphoblast proliferation. This is Zinc finger protein 335 (ZNF335) from Homo sapiens (Human).